The primary structure comprises 858 residues: Bifunctional uridylyltransferase/uridylyl-removing enzyme (858 aa).

Positions 1-324 (MSASVAEPPP…PATSGVTRVL (324 aa)) are uridylyltransferase. Residues 325–681 (SPGRFVEKQG…ARPSPVGDAL (357 aa)) form a uridylyl-removing region. The HD domain occupies 443 to 565 (VDQHILMVLR…VGSERRLTAL (123 aa)). 2 consecutive ACT domains span residues 682–761 (QVLV…PEPS) and 790–858 (ILSV…AIAV).

The protein belongs to the GlnD family. The cofactor is Mg(2+).

The enzyme catalyses [protein-PII]-L-tyrosine + UTP = [protein-PII]-uridylyl-L-tyrosine + diphosphate. It catalyses the reaction [protein-PII]-uridylyl-L-tyrosine + H2O = [protein-PII]-L-tyrosine + UMP + H(+). With respect to regulation, uridylyltransferase (UTase) activity is inhibited by glutamine, while glutamine activates uridylyl-removing (UR) activity. Functionally, modifies, by uridylylation and deuridylylation, the PII regulatory proteins (GlnB and homologs), in response to the nitrogen status of the cell that GlnD senses through the glutamine level. Under low glutamine levels, catalyzes the conversion of the PII proteins and UTP to PII-UMP and PPi, while under higher glutamine levels, GlnD hydrolyzes PII-UMP to PII and UMP (deuridylylation). Thus, controls uridylylation state and activity of the PII proteins, and plays an important role in the regulation of nitrogen assimilation and metabolism. The protein is Bifunctional uridylyltransferase/uridylyl-removing enzyme of Burkholderia mallei (strain NCTC 10247).